The following is a 496-amino-acid chain: Glutamyl-tRNA(Gln) amidotransferase subunit A (496 aa).

Active-site charge relay system residues include Lys-79 and Ser-159. Ser-183 functions as the Acyl-ester intermediate in the catalytic mechanism.

Belongs to the amidase family. GatA subfamily. Heterotrimer of A, B and C subunits.

It carries out the reaction L-glutamyl-tRNA(Gln) + L-glutamine + ATP + H2O = L-glutaminyl-tRNA(Gln) + L-glutamate + ADP + phosphate + H(+). Allows the formation of correctly charged Gln-tRNA(Gln) through the transamidation of misacylated Glu-tRNA(Gln) in organisms which lack glutaminyl-tRNA synthetase. The reaction takes place in the presence of glutamine and ATP through an activated gamma-phospho-Glu-tRNA(Gln). This chain is Glutamyl-tRNA(Gln) amidotransferase subunit A, found in Bartonella quintana (strain Toulouse) (Rochalimaea quintana).